The chain runs to 2849 residues: Immunoglobulin-like and fibronectin type III domain-containing protein 1 (2849 aa).

The disordered stretch occupies residues 82-108 (AGSAARPDGSGSESLAASSSWKPRRRL). A compositionally biased stretch (low complexity) spans 90–101 (GSGSESLAASSS). Residues 187–277 (PDFKQKPVTL…GEATCSVRLT (91 aa)) form the Ig-like 1 domain. Residues 347-380 (IVDFRGMLRKLQEMKKEQEDRMAQYVSAIANLRH) are a coiled coil. An Ig-like 2 domain is found at 468–557 (PRVVVPLAET…SSAWLVVEGG (90 aa)). Disordered regions lie at residues 577-600 (LASEAEDAGGISIKGGQSRERGSL), 652-760 (VTLP…AGQR), 864-924 (YPGQ…DLRS), 962-981 (VGQREAGKPGGAEYEDIGPQ), 1061-1103 (EEEF…EGMA), 1221-1258 (TVGSVGGHGRKDSGTAGKVGEGYTEAEPGHSGGLSSWG), 1312-1338 (STVGTGNWDKARHPGAPSPHEAGSEGH), 1350-1384 (RDGSGIPEPWSAGDKTAYGEESKGLGPERTGPDGE), 1498-1523 (ETGRMESKNGVGYRGSSVGPGEMGSE), 1654-1675 (EWKDDSGFQGSLRDRGTPSEEI), 1724-1780 (QQGV…ATSH), and 1827-2055 (GAAG…SMDH). Basic and acidic residues predominate over residues 717–742 (HPRDRRLESRGEGQEHSEGHGSELDR). Residues 866–880 (GQTSEGNDTQKSSLS) show a composition bias toward polar residues. Residues 1070–1084 (RSQGKGSRGGMGLGG) are compositionally biased toward gly residues. A compositionally biased stretch (polar residues) spans 1873-1882 (SKPQEPQNEL). Composition is skewed to basic and acidic residues over residues 1988–2004 (SEDRGSLREPWSEDRRQ) and 2012–2021 (SRRDTQEGRS). The Ig-like 3 domain occupies 2034 to 2137 (PRSRYQPGTG…GCQHSEASLT (104 aa)). 3 consecutive Fibronectin type-III domains span residues 2244–2339 (PPQG…VAPE), 2344–2443 (PPSA…MRPP), and 2445–2540 (PVRD…AMPA). The region spanning 2544 to 2628 (PRFLMDSGTK…LRNLQGKEAT (85 aa)) is the Ig-like 4 domain. A Fibronectin type-III 4 domain is found at 2641-2735 (APGSIYLQEN…TSQPWCIPRQ (95 aa)). In terms of domain architecture, Ig-like 5 spans 2749-2845 (PDLSQKPRFL…AVSTATLIVT (97 aa)).

As to quaternary structure, interacts with FLNC. Interacts with KY. In terms of tissue distribution, isoform 1, isoform 3 and isoform 4 are expressed in skeletal muscle while isoform 2 is detected in both skeletal muscle and heart (at protein level).

It localises to the nucleus. Its subcellular location is the cytoplasm. It is found in the myofibril. The protein localises to the sarcomere. The protein resides in the z line. The polypeptide is Immunoglobulin-like and fibronectin type III domain-containing protein 1 (Igfn1) (Mus musculus (Mouse)).